Consider the following 563-residue polypeptide: Arginine--tRNA ligase (563 aa).

Residues 121–131 carry the 'HIGH' region motif; the sequence is PNIAKPFSIGH.

Belongs to the class-I aminoacyl-tRNA synthetase family. Monomer.

The protein resides in the cytoplasm. The enzyme catalyses tRNA(Arg) + L-arginine + ATP = L-arginyl-tRNA(Arg) + AMP + diphosphate. The sequence is that of Arginine--tRNA ligase from Streptococcus equi subsp. equi (strain 4047).